A 361-amino-acid polypeptide reads, in one-letter code: MTPTLRRKLEALAERREELQHLLSDPEVVSNNDKFRSLSRELSQLEPVALAMQEEARAKADLSAAEAMRNDPEMRELAEEEILAAQARLDELDAQLALLLVPRDPRDEGNLFLEVRAGTGGDEAAIFAGDLFRMYARYAERQGWKVEIESDSPGEHGGYKEVVARVVGRGAYSRLKFESGTHRVQRVPATESQGRIHTSAATVAIIPEADDVEEIVINPADLKVDTFRSSGAGGQHVNKTESAIRITHVPSGVVVECQTERSQHANRDKAMKRLKAQLVEAERSKAAAAEAQTRKLQVGSGDRSQRIRTYSFPQGRITDHRVEGLTLYDLPNIIEGDLDALIARLLHEHQADELARLSEGT.

At glutamine 235 the chain carries N5-methylglutamine.

The protein belongs to the prokaryotic/mitochondrial release factor family. Methylated by PrmC. Methylation increases the termination efficiency of RF1.

Its subcellular location is the cytoplasm. Functionally, peptide chain release factor 1 directs the termination of translation in response to the peptide chain termination codons UAG and UAA. The sequence is that of Peptide chain release factor 1 from Xanthomonas campestris pv. campestris (strain B100).